The primary structure comprises 293 residues: Protease HtpX (293 aa).

Helical transmembrane passes span 4-24 and 38-58; these read IGLF…VLSL and LTNL…ISLF. H145 lines the Zn(2+) pocket. Residue E146 is part of the active site. H149 serves as a coordination point for Zn(2+). 2 consecutive transmembrane segments (helical) span residues 156–176 and 193–213; these read ITLS…ARII and IAFF…ASMI. E222 is a Zn(2+) binding site.

Belongs to the peptidase M48B family. The cofactor is Zn(2+).

It is found in the cell inner membrane. In Cellvibrio japonicus (strain Ueda107) (Pseudomonas fluorescens subsp. cellulosa), this protein is Protease HtpX.